The chain runs to 303 residues: UDP-N-acetylenolpyruvoylglucosamine reductase (303 aa).

Residues 27–217 form the FAD-binding PCMH-type domain; sequence KVGGISQVFY…QTVRKLTQPI (191 aa). Arginine 175 is a catalytic residue. The active-site Proton donor is the serine 224. The active site involves glutamate 294.

The protein belongs to the MurB family. The cofactor is FAD.

The protein resides in the cytoplasm. The enzyme catalyses UDP-N-acetyl-alpha-D-muramate + NADP(+) = UDP-N-acetyl-3-O-(1-carboxyvinyl)-alpha-D-glucosamine + NADPH + H(+). It participates in cell wall biogenesis; peptidoglycan biosynthesis. Cell wall formation. This is UDP-N-acetylenolpyruvoylglucosamine reductase from Orientia tsutsugamushi (strain Ikeda) (Rickettsia tsutsugamushi).